The following is a 904-amino-acid chain: Alanine--tRNA ligase (904 aa).

4 residues coordinate Zn(2+): H584, H588, C687, and H691.

It belongs to the class-II aminoacyl-tRNA synthetase family. Zn(2+) is required as a cofactor.

It localises to the cytoplasm. The catalysed reaction is tRNA(Ala) + L-alanine + ATP = L-alanyl-tRNA(Ala) + AMP + diphosphate. Functionally, catalyzes the attachment of alanine to tRNA(Ala) in a two-step reaction: alanine is first activated by ATP to form Ala-AMP and then transferred to the acceptor end of tRNA(Ala). Also edits incorrectly charged Ser-tRNA(Ala) and Gly-tRNA(Ala) via its editing domain. This chain is Alanine--tRNA ligase, found in Mycobacterium bovis (strain ATCC BAA-935 / AF2122/97).